The sequence spans 369 residues: 3',5'-cyclic-nucleotide phosphodiesterase 1 (369 aa).

This sequence belongs to the cyclic nucleotide phosphodiesterase class-II family.

The catalysed reaction is a nucleoside 3',5'-cyclic phosphate + H2O = a nucleoside 5'-phosphate + H(+). Functionally, controls the level of cAMP in yeast cells, together with the high-affinity cAMP phosphodiesterase (PDE2). This is 3',5'-cyclic-nucleotide phosphodiesterase 1 (PDE1) from Saccharomyces cerevisiae (strain ATCC 204508 / S288c) (Baker's yeast).